The primary structure comprises 430 residues: Dihydrolipoyllysine-residue acetyltransferase component of pyruvate dehydrogenase complex (430 aa).

The region spanning Ala2–Asp77 is the Lipoyl-binding domain. Lys43 is subject to N6-lipoyllysine. The segment at Asp80–Arg122 is disordered. Residues Met84–Ala104 are compositionally biased toward basic and acidic residues. Positions Lys125–Leu162 constitute a Peripheral subunit-binding (PSBD) domain. Residues Gly164 to Pro199 form a disordered region. Over residues Ala166 to Ser193 the composition is skewed to low complexity. The active site involves His401.

This sequence belongs to the 2-oxoacid dehydrogenase family. As to quaternary structure, forms a 24-polypeptide structural core with octahedral symmetry. The cofactor is (R)-lipoate.

The catalysed reaction is N(6)-[(R)-dihydrolipoyl]-L-lysyl-[protein] + acetyl-CoA = N(6)-[(R)-S(8)-acetyldihydrolipoyl]-L-lysyl-[protein] + CoA. The pyruvate dehydrogenase complex catalyzes the overall conversion of pyruvate to acetyl-CoA and CO(2). It contains multiple copies of three enzymatic components: pyruvate dehydrogenase (E1), dihydrolipoamide acetyltransferase (E2) and lipoamide dehydrogenase (E3). The chain is Dihydrolipoyllysine-residue acetyltransferase component of pyruvate dehydrogenase complex (pdhC) from Staphylococcus aureus (strain Mu50 / ATCC 700699).